The sequence spans 497 residues: Probable cytosol aminopeptidase (497 aa).

Mn(2+) contacts are provided by Lys-267 and Asp-272. Residue Lys-279 is part of the active site. Residues Asp-290, Asp-349, and Glu-351 each coordinate Mn(2+). Arg-353 is a catalytic residue.

Belongs to the peptidase M17 family. Requires Mn(2+) as cofactor.

The protein resides in the cytoplasm. The enzyme catalyses Release of an N-terminal amino acid, Xaa-|-Yaa-, in which Xaa is preferably Leu, but may be other amino acids including Pro although not Arg or Lys, and Yaa may be Pro. Amino acid amides and methyl esters are also readily hydrolyzed, but rates on arylamides are exceedingly low.. The catalysed reaction is Release of an N-terminal amino acid, preferentially leucine, but not glutamic or aspartic acids.. Presumably involved in the processing and regular turnover of intracellular proteins. Catalyzes the removal of unsubstituted N-terminal amino acids from various peptides. The polypeptide is Probable cytosol aminopeptidase (Nitrosomonas europaea (strain ATCC 19718 / CIP 103999 / KCTC 2705 / NBRC 14298)).